Consider the following 123-residue polypeptide: Con-ikot-ikot (123 aa).

The first 18 residues, 1-18, serve as a signal peptide directing secretion; that stretch reads MAMNMSMTLCMFVMVVVA. The propeptide occupies 19–37; it reads ATVIDSTQLQEPDLSRMRR. 5 disulfides stabilise this stretch: C49–C80, C50–C89, C57–C72, C90–C118, and C96–C113.

As to quaternary structure, homodimer; disulfide-linked. In terms of tissue distribution, expressed by the venom duct.

The protein localises to the secreted. Its function is as follows. Potently and selectively blocks the desensitization of ionotropic glutamate AMPA receptors (GRIA1, GRIA2, GRIA3 and GRIA4). Binds to a different site than does the drug cyclothiazide. The toxin acts like a straitjacket on the 'gating ring' of the ligand-binding domain (LBD) of the receptor. It does so by restraining the domains via both intra- and interdimer cross-links such that agonist-induced closure of the LBD 'clamshells' is transduced into an irislike expansion of the gating ring. Compared to other desensitization blockers, it is a poor stabilizer of the open channel because toxin-bound AMPA receptors undergo frequent brief closures. In vitro, application of the toxin to hippocampal slices causes a large and rapid increase in resting AMPA receptor-mediated current leading to neuronal death. The polypeptide is Con-ikot-ikot (Conus striatus (Striated cone)).